A 170-amino-acid chain; its full sequence is Xanthine-guanine phosphoribosyltransferase (170 aa).

5-phospho-alpha-D-ribose 1-diphosphate is bound by residues 41 to 42 (RG) and 98 to 106 (DDLTDTGKT). Aspartate 99 contributes to the Mg(2+) binding site. Aspartate 102 contacts guanine. Residue aspartate 102 coordinates xanthine. 102–106 (DTGKT) is a binding site for GMP.

This sequence belongs to the purine/pyrimidine phosphoribosyltransferase family. XGPT subfamily. Homotetramer. Requires Mg(2+) as cofactor.

It localises to the cell inner membrane. It catalyses the reaction GMP + diphosphate = guanine + 5-phospho-alpha-D-ribose 1-diphosphate. The catalysed reaction is XMP + diphosphate = xanthine + 5-phospho-alpha-D-ribose 1-diphosphate. The enzyme catalyses IMP + diphosphate = hypoxanthine + 5-phospho-alpha-D-ribose 1-diphosphate. Its pathway is purine metabolism; GMP biosynthesis via salvage pathway; GMP from guanine: step 1/1. The protein operates within purine metabolism; XMP biosynthesis via salvage pathway; XMP from xanthine: step 1/1. In terms of biological role, purine salvage pathway enzyme that catalyzes the transfer of the ribosyl-5-phosphate group from 5-phospho-alpha-D-ribose 1-diphosphate (PRPP) to the N9 position of the 6-oxopurines guanine and xanthine to form the corresponding ribonucleotides GMP (guanosine 5'-monophosphate) and XMP (xanthosine 5'-monophosphate), with the release of PPi. To a lesser extent, also acts on hypoxanthine. The chain is Xanthine-guanine phosphoribosyltransferase from Brucella abortus (strain 2308).